The chain runs to 245 residues: Phosducin (245 aa).

Residues 1–14 (MEEAKSQSLEEDFE) show a composition bias toward acidic residues. The segment at 1–68 (MEEAKSQSLE…RDNKDSKERF (68 aa)) is disordered. Positions 1 to 241 (MEEAKSQSLE…THALDQTNME (241 aa)) constitute a Phosducin domain. Residues 59–68 (RDNKDSKERF) show a composition bias toward basic and acidic residues. A Phosphoserine; by PKA modification is found at S73. The thioredoxin fold stretch occupies residues 111–245 (YGFVYELETG…DQTNMEEDIE (135 aa)).

This sequence belongs to the phosducin family. As to quaternary structure, interacts with CRX. Forms a complex with the beta and gamma subunits of the GTP-binding protein, transducin. In terms of processing, light-induced changes in cyclic nucleotide levels modulate the phosphorylation of this protein by cAMP kinase.

The protein resides in the cytoplasm. The protein localises to the cytosol. It localises to the nucleus. Its subcellular location is the cell projection. It is found in the cilium. The protein resides in the photoreceptor outer segment. The protein localises to the photoreceptor inner segment. In terms of biological role, inhibits the transcriptional activation activity of the cone-rod homeobox CRX. May participate in the regulation of visual phototransduction or in the integration of photoreceptor metabolism. The polypeptide is Phosducin (PDC) (Felis catus (Cat)).